A 506-amino-acid polypeptide reads, in one-letter code: Histidine ammonia-lyase (506 aa).

Positions Ala-143–Gly-145 form a cross-link, 5-imidazolinone (Ala-Gly). At Ser-144 the chain carries 2,3-didehydroalanine (Ser).

Belongs to the PAL/histidase family. In terms of processing, contains an active site 4-methylidene-imidazol-5-one (MIO), which is formed autocatalytically by cyclization and dehydration of residues Ala-Ser-Gly.

The protein localises to the cytoplasm. It carries out the reaction L-histidine = trans-urocanate + NH4(+). The protein operates within amino-acid degradation; L-histidine degradation into L-glutamate; N-formimidoyl-L-glutamate from L-histidine: step 1/3. The chain is Histidine ammonia-lyase from Salmonella paratyphi B (strain ATCC BAA-1250 / SPB7).